Consider the following 967-residue polypeptide: Phosphoenolpyruvate carboxylase (967 aa).

S11 is subject to Phosphoserine. Active-site residues include H172 and K601.

The protein belongs to the PEPCase type 1 family. As to quaternary structure, homotetramer. It depends on Mg(2+) as a cofactor.

The protein resides in the cytoplasm. It carries out the reaction oxaloacetate + phosphate = phosphoenolpyruvate + hydrogencarbonate. Its pathway is photosynthesis; C3 acid pathway. With respect to regulation, by light-reversible phosphorylation. Functionally, through the carboxylation of phosphoenolpyruvate (PEP) it forms oxaloacetate, a four-carbon dicarboxylic acid source for the tricarboxylic acid cycle. This chain is Phosphoenolpyruvate carboxylase (PPCA1), found in Flaveria pringlei.